The primary structure comprises 295 residues: Glutamyl-Q tRNA(Asp) synthetase (295 aa).

L-glutamate contacts are provided by residues 5–9 (RFAPS) and Glu-41. The 'HIGH' region signature appears at 8-18 (PSPTGLLHIGS). The Zn(2+) site is built by Cys-97, Cys-99, Tyr-117, and Cys-121. The L-glutamate site is built by Tyr-178 and Arg-196. Residues 234–238 (KWSKQ) carry the 'KMSKS' region motif. Lys-237 is an ATP binding site.

This sequence belongs to the class-I aminoacyl-tRNA synthetase family. GluQ subfamily. The cofactor is Zn(2+).

Its function is as follows. Catalyzes the tRNA-independent activation of glutamate in presence of ATP and the subsequent transfer of glutamate onto a tRNA(Asp). Glutamate is transferred on the 2-amino-5-(4,5-dihydroxy-2-cyclopenten-1-yl) moiety of the queuosine in the wobble position of the QUC anticodon. This chain is Glutamyl-Q tRNA(Asp) synthetase, found in Neisseria gonorrhoeae (strain ATCC 700825 / FA 1090).